A 330-amino-acid chain; its full sequence is PTS system mannose-specific EIIAB component (330 aa).

A PTS EIIA type-4 domain is found at 2–130; sequence GIGIIIASHG…NIIKESKDGI (129 aa). His-10 serves as the catalytic Tele-phosphohistidine intermediate; for EIIA activity. His-10 is modified (phosphohistidine; by HPr). Residues 143-161 are hinge; the sequence is TAATEKVVNALQGAIPAGT. The PTS EIIB type-4 domain maps to 166-330; sequence GKLKINLARV…FELIQKANIK (165 aa). The active-site Pros-phosphohistidine intermediate; for EIIB activity is the His-181. His-181 carries the phosphohistidine; by EIIA modification.

As to quaternary structure, homodimer.

The protein resides in the cytoplasm. Its subcellular location is the cell membrane. The enzyme catalyses D-mannose(out) + N(pros)-phospho-L-histidyl-[protein] = D-mannose 6-phosphate(in) + L-histidyl-[protein]. Functionally, the phosphoenolpyruvate-dependent sugar phosphotransferase system (sugar PTS), a major carbohydrate active transport system, catalyzes the phosphorylation of incoming sugar substrates concomitantly with their translocation across the cell membrane. The enzyme II ManXYZ PTS system is involved in mannose transport. The sequence is that of PTS system mannose-specific EIIAB component from Streptococcus pyogenes serotype M6 (strain ATCC BAA-946 / MGAS10394).